Consider the following 142-residue polypeptide: 3-hydroxyacyl-[acyl-carrier-protein] dehydratase FabZ (142 aa).

The active site involves His-47.

The protein belongs to the thioester dehydratase family. FabZ subfamily.

The protein localises to the cytoplasm. The enzyme catalyses a (3R)-hydroxyacyl-[ACP] = a (2E)-enoyl-[ACP] + H2O. Involved in unsaturated fatty acids biosynthesis. Catalyzes the dehydration of short chain beta-hydroxyacyl-ACPs and long chain saturated and unsaturated beta-hydroxyacyl-ACPs. The chain is 3-hydroxyacyl-[acyl-carrier-protein] dehydratase FabZ from Thermoanaerobacter pseudethanolicus (strain ATCC 33223 / 39E) (Clostridium thermohydrosulfuricum).